We begin with the raw amino-acid sequence, 431 residues long: Zeaxanthin glucosyltransferase (431 aa).

Belongs to the UDP-glycosyltransferase family.

The enzyme catalyses all-trans-zeaxanthin + 2 UDP-alpha-D-glucose = zeaxanthin bis(beta-D-glucoside) + 2 UDP + 2 H(+). The protein operates within carotenoid biosynthesis; zeaxanthin diglucoside biosynthesis. Functionally, catalyzes the glycosylation reaction which converts zeaxanthin to zeaxanthin bis(beta-D-glucoside). The reaction proceeds in two steps with the monoglucoside as an intermediate. This Pantoea ananas (Erwinia uredovora) protein is Zeaxanthin glucosyltransferase (crtX).